The sequence spans 1407 residues: DNA-directed RNA polymerase subunit beta' (1407 aa).

The Zn(2+) site is built by C70, C72, C85, and C88. Positions 460, 462, and 464 each coordinate Mg(2+). Residues C814, C888, C895, and C898 each contribute to the Zn(2+) site.

It belongs to the RNA polymerase beta' chain family. The RNAP catalytic core consists of 2 alpha, 1 beta, 1 beta' and 1 omega subunit. When a sigma factor is associated with the core the holoenzyme is formed, which can initiate transcription. Mg(2+) is required as a cofactor. Requires Zn(2+) as cofactor.

It carries out the reaction RNA(n) + a ribonucleoside 5'-triphosphate = RNA(n+1) + diphosphate. Its function is as follows. DNA-dependent RNA polymerase catalyzes the transcription of DNA into RNA using the four ribonucleoside triphosphates as substrates. This chain is DNA-directed RNA polymerase subunit beta', found in Salmonella choleraesuis (strain SC-B67).